The primary structure comprises 682 residues: Potassium-transporting ATPase ATP-binding subunit (682 aa).

4 helical membrane passes run P34–V54, I58–F78, I219–L239, and V254–I274. The 4-aspartylphosphate intermediate role is filled by D307. ATP-binding positions include D344, E348, F377–S384, and K395. Residues D518 and D522 each coordinate Mg(2+). Helical transmembrane passes span F588–M608, A616–L636, and L662–A682.

The protein belongs to the cation transport ATPase (P-type) (TC 3.A.3) family. Type IA subfamily. The system is composed of three essential subunits: KdpA, KdpB and KdpC.

Its subcellular location is the cell inner membrane. It catalyses the reaction K(+)(out) + ATP + H2O = K(+)(in) + ADP + phosphate + H(+). Its function is as follows. Part of the high-affinity ATP-driven potassium transport (or Kdp) system, which catalyzes the hydrolysis of ATP coupled with the electrogenic transport of potassium into the cytoplasm. This subunit is responsible for energy coupling to the transport system and for the release of the potassium ions to the cytoplasm. This Salmonella agona (strain SL483) protein is Potassium-transporting ATPase ATP-binding subunit.